Reading from the N-terminus, the 568-residue chain is Sulfite reductase [NADPH] hemoprotein beta-component (568 aa).

Cys-426, Cys-432, Cys-471, and Cys-475 together coordinate [4Fe-4S] cluster. Cys-475 contributes to the siroheme binding site.

The protein belongs to the nitrite and sulfite reductase 4Fe-4S domain family. As to quaternary structure, alpha(8)-beta(8). The alpha component is a flavoprotein, the beta component is a hemoprotein. Siroheme is required as a cofactor. It depends on [4Fe-4S] cluster as a cofactor.

The catalysed reaction is hydrogen sulfide + 3 NADP(+) + 3 H2O = sulfite + 3 NADPH + 4 H(+). Its pathway is sulfur metabolism; hydrogen sulfide biosynthesis; hydrogen sulfide from sulfite (NADPH route): step 1/1. Functionally, component of the sulfite reductase complex that catalyzes the 6-electron reduction of sulfite to sulfide. This is one of several activities required for the biosynthesis of L-cysteine from sulfate. This chain is Sulfite reductase [NADPH] hemoprotein beta-component, found in Xylella fastidiosa (strain M12).